A 427-amino-acid chain; its full sequence is Inward rectifier potassium channel 2 (427 aa).

The Cytoplasmic segment spans residues 1–81 (MGSVRTNRYS…IFTTCVDIRW (81 aa)). S-nitrosocysteine is present on Cys-76. A helical membrane pass occupies residues 82 to 106 (RWMLVIFCLAFVLSWLFFGCVFWLI). The Extracellular portion of the chain corresponds to 107 to 128 (ALLHGDLDASRESKACVSEVNS). Residues 129–140 (FTAAFLFSIETQ) constitute an intramembrane region (helical; Pore-forming). Residues 141-147 (TTIGYGF) constitute an intramembrane region (pore-forming). The Selectivity filter motif lies at 142-147 (TIGYGF). Residues 148 to 156 (RCVTDECPV) lie on the Extracellular side of the membrane. The helical transmembrane segment at 157-178 (AVFMVVFQSIVGCIIDAFIIGA) threads the bilayer. At 179–427 (VMAKMAKPKK…PRPLRRESEI (249 aa)) the chain is on the cytoplasmic side. Positions 181–208 (AKMAKPKKRNETLVFSHNAVIAMRDGKL) are polyphosphoinositide (PIP2)-binding. Positions 384 to 427 (SKEEDDSENGVPESTSTDTPPDIDLHNQASVPLEPRPLRRESEI) are disordered. Positions 425 to 427 (SEI) match the PDZ-binding motif.

This sequence belongs to the inward rectifier-type potassium channel (TC 1.A.2.1) family. KCNJ2 subfamily. Homotetramer. Homomultimeric and heteromultimeric association with KCNJ4/Kir2.3. Can form heteromeric channels with Kir2.6/KCNJ18. Associates, via its PDZ-recognition domain, with a complex containing LIN7A, LIN7B, LIN7C, DLG1, CASK and APBA1. S-nitrosylation increases the open probability and inward rectifying currents. In terms of tissue distribution, highly expressed in the ventricle and skeletal muscle, moderately in cerebrum and cerebellum. Only low levels are detected in kidney or lung.

The protein resides in the cell membrane. The protein localises to the sarcolemma. It is found in the T-tubule. The enzyme catalyses K(+)(in) = K(+)(out). Its activity is regulated as follows. Activated by phosphatidylinositol 4,5 biphosphate (PtdIns(4,5)P2). Functionally, inward rectifier potassium channels are characterized by a greater tendency to allow potassium to flow into the cell rather than out of it. Their voltage dependence is regulated by the concentration of extracellular potassium; as external potassium is raised, the voltage range of the channel opening shifts to more positive voltages. The inward rectification is mainly due to the blockage of outward current by internal magnesium. Can be blocked by extracellular barium and cesium. Probably participates in establishing action potential waveform and excitability of neuronal and muscle tissues. The polypeptide is Inward rectifier potassium channel 2 (KCNJ2) (Oryctolagus cuniculus (Rabbit)).